Consider the following 343-residue polypeptide: D-erythrose-4-phosphate dehydrogenase (343 aa).

NAD(+) is bound at residue 12 to 13; sequence RI. Residues 154–156, R200, 213–214, and R236 each bind substrate; these read SCT and TK. Catalysis depends on C155, which acts as the Nucleophile. N318 contributes to the NAD(+) binding site.

It belongs to the glyceraldehyde-3-phosphate dehydrogenase family. Epd subfamily. Homotetramer.

The protein resides in the cytoplasm. It catalyses the reaction D-erythrose 4-phosphate + NAD(+) + H2O = 4-phospho-D-erythronate + NADH + 2 H(+). Its pathway is cofactor biosynthesis; pyridoxine 5'-phosphate biosynthesis; pyridoxine 5'-phosphate from D-erythrose 4-phosphate: step 1/5. Functionally, catalyzes the NAD-dependent conversion of D-erythrose 4-phosphate to 4-phosphoerythronate. The protein is D-erythrose-4-phosphate dehydrogenase of Pseudoalteromonas translucida (strain TAC 125).